The following is a 478-amino-acid chain: MTTDWNFEATYLELRDIFYDRGPIHPVDNPTLVLFNDALAASLGLDAQSLKQDIDLLAGNRQTETSFSQAYAGHQFGNLTMLGDGRALMLGEHVTPNGKRVDVQLKGSGPTEYSRGGDGRAALGPMVREFIISEAMHALGIPTNRALAVIQTGEAIMRQGPKHGAILTRVASSHLRVGTFQFAAGAGSIDDVIALTEVAIKRHDPDLIDAPNRYEQFLGRVVERQARLIANWQLVGFIHGVMNTDNMFISGEGLDYGPCAFMDTYHPETVFSSIDREGRYAYANQPYIGSWNLARLAETLLPLLGETKEEAVDVANKQLTRYTELYKEAYFTGLAHKIGLFVRKDGDDELTDELLRLMMETEADYTNTFRSLTLGEIESLPFATRKDGKVWLGAWRKRLNGQGLPDEDVSRIMRQYNPAVIPRNHHVEKAIQAAERGDFGPTEAILTILRDPYNYDQSSEYVSAGPPRTYPYQTFCGT.

ATP contacts are provided by Gly-83, Gly-85, Arg-86, Lys-106, Asp-118, Gly-119, Arg-169, and Arg-176. The Proton acceptor role is filled by Asp-245. Mg(2+) is bound by residues Asn-246 and Asp-255. Position 255 (Asp-255) interacts with ATP.

Belongs to the SELO family. The cofactor is Mg(2+). Requires Mn(2+) as cofactor.

It carries out the reaction L-seryl-[protein] + ATP = 3-O-(5'-adenylyl)-L-seryl-[protein] + diphosphate. The catalysed reaction is L-threonyl-[protein] + ATP = 3-O-(5'-adenylyl)-L-threonyl-[protein] + diphosphate. It catalyses the reaction L-tyrosyl-[protein] + ATP = O-(5'-adenylyl)-L-tyrosyl-[protein] + diphosphate. The enzyme catalyses L-histidyl-[protein] + UTP = N(tele)-(5'-uridylyl)-L-histidyl-[protein] + diphosphate. It carries out the reaction L-seryl-[protein] + UTP = O-(5'-uridylyl)-L-seryl-[protein] + diphosphate. The catalysed reaction is L-tyrosyl-[protein] + UTP = O-(5'-uridylyl)-L-tyrosyl-[protein] + diphosphate. Nucleotidyltransferase involved in the post-translational modification of proteins. It can catalyze the addition of adenosine monophosphate (AMP) or uridine monophosphate (UMP) to a protein, resulting in modifications known as AMPylation and UMPylation. The chain is Protein nucleotidyltransferase YdiU from Exiguobacterium sp. (strain ATCC BAA-1283 / AT1b).